We begin with the raw amino-acid sequence, 523 residues long: Mogroside I-A1 synthase (523 aa).

His39 acts as the Proton acceptor in catalysis. The Charge relay role is filled by Asp136. The UDP-alpha-D-glucose site is built by Ser311, Gln374, Trp392, Asn393, Ser394, Glu397, Asp413, and Gln414.

This sequence belongs to the UDP-glycosyltransferase family. As to expression, highly expressed in young fruits 15 and 34 days after anthesis (15-DAA and 34-DAA).

It catalyses the reaction mogrol + UDP-alpha-D-glucose = mogroside I-A1 + UDP + H(+). The catalysed reaction is mogroside I-A1 + UDP-alpha-D-glucose = mogroside IIE + UDP + H(+). It carries out the reaction mogroside IE + UDP-alpha-D-glucose = mogroside IIE + UDP + H(+). The enzyme catalyses mogroside II-A1 + UDP-alpha-D-glucose = mogroside IIIX + UDP + H(+). It catalyses the reaction mogroside II-A + UDP-alpha-D-glucose = mogroside III + UDP + H(+). The catalysed reaction is mogroside IIE + UDP-alpha-D-glucose = mogroside III-C3(1-&gt;6) + UDP + H(+). It carries out the reaction mogroside III + UDP-alpha-D-glucose = isomogroside IV + UDP + H(+). The enzyme catalyses mogroside III + UDP-alpha-D-glucose = mogroside IV + UDP + H(+). It catalyses the reaction mogroside IIIX + UDP-alpha-D-glucose = mogroside IVA + UDP + H(+). The catalysed reaction is siamenoside I + UDP-alpha-D-glucose = isomogroside V + UDP + H(+). Its pathway is secondary metabolite biosynthesis; terpenoid biosynthesis. In terms of biological role, UDP-glycosyltransferase involved in the biosynthesis of cucurbitacin and mogroside tetracyclic triterpene natural products (e.g. siamenoside I and mogrosides IV, V and VI). Cucurbitacins have cytotoxic properties and exhibit deterrent taste as a defense barrier against herbivores. Mogrosides are nonsugar highly oxygenated compounds used as high-intensity zero-calorie sweeteners; they also possess pharmacological properties such as regulating immunity, lowering blood sugar and lipid levels, protecting the liver, and acting as antioxidants and antitumor agents. Catalyzes the C24 primary glucosylation of mogrol and mogroside I-E1, and the C3 primary glucosylation of mogroside I-A1, mogroside II-A1 and mogroside II-A. Also supports branching glucosylations of mogroside II-E, mogroside III, mogroside IIIx and siamenoside I. The polypeptide is Mogroside I-A1 synthase (Siraitia grosvenorii (Monk's fruit)).